Reading from the N-terminus, the 109-residue chain is Sulredoxin (109 aa).

Residues 3-107 (WKRTISAKAL…IRDNNGWIEV (105 aa)) form the Rieske domain. The [2Fe-2S] cluster site is built by Cys43, His45, Cys62, and His65.

As to quaternary structure, homooligomeric. [2Fe-2S] cluster serves as cofactor.

It localises to the cytoplasm. In terms of biological role, not yet known. This Sulfurisphaera tokodaii (strain DSM 16993 / JCM 10545 / NBRC 100140 / 7) (Sulfolobus tokodaii) protein is Sulredoxin (sdx).